Here is a 551-residue protein sequence, read N- to C-terminus: Vacuolar protein sorting-associated protein 17 (551 aa).

Positions 1–100 (MTSAVPYDPY…SERVILPERS (100 aa)) are disordered. Composition is skewed to polar residues over residues 29–39 (AATTTDGSSSM) and 46–64 (TEQT…NIQN). Positions 108–227 (LLAKVTGLER…FFIESDFNTY (120 aa)) constitute a PX domain. A coiled-coil region spans residues 359 to 385 (IMRNLVQAQQNSKAKQEQARRFRSRRD). Positions 474-504 (RLGRHAVSNNNSDTSQTLKGDSWTGESNRKS) are disordered. Positions 480–504 (VSNNNSDTSQTLKGDSWTGESNRKS) are enriched in polar residues. At serine 544 the chain carries Phosphoserine.

The protein belongs to the VPS17 family. As to quaternary structure, component of the retromer complex which consists of VPS29, VPS26, VPS35, VPS5 and VPS17. Component of a retromer subcomplex consisting of VPS5 and VPS17. Post-translationally, phosphorylated on one or more serine residues.

The protein resides in the endomembrane system. Its function is as follows. Component of the membrane-associated retromer complex which is essential in endosome-to-Golgi retrograde transport. The VPS5-VPS17 subcomplex may assemble onto the membrane to promote vesicle formation and is required for recycling the vacuolar protein-sorting receptor. Required for the sorting and delivery of a subset of soluble vacuolar hydrolases. Required for retention of late Golgi membrane proteins and vacuolar biogenesis. Involved in vacuolar fragmentation during hyperosmotic stress. This chain is Vacuolar protein sorting-associated protein 17, found in Saccharomyces cerevisiae (strain ATCC 204508 / S288c) (Baker's yeast).